Reading from the N-terminus, the 908-residue chain is UPF0182 protein NT01CX_0852 (908 aa).

Transmembrane regions (helical) follow at residues 8–28, 47–67, 96–116, 157–177, 209–229, 253–273, and 280–300; these read IGLF…VNVI, FTSV…AIKT, IINA…SLGY, LLSL…FLNI, LAIL…IKAW, FYIA…FSIL, and IISC…VSGA.

The protein belongs to the UPF0182 family.

It localises to the cell membrane. The sequence is that of UPF0182 protein NT01CX_0852 from Clostridium novyi (strain NT).